Consider the following 360-residue polypeptide: Peptide chain release factor 1 (360 aa).

N5-methylglutamine is present on glutamine 233. Residues asparagine 286–isoleucine 305 form a disordered region.

Belongs to the prokaryotic/mitochondrial release factor family. Post-translationally, methylated by PrmC. Methylation increases the termination efficiency of RF1.

It is found in the cytoplasm. Its function is as follows. Peptide chain release factor 1 directs the termination of translation in response to the peptide chain termination codons UAG and UAA. This is Peptide chain release factor 1 from Acetivibrio thermocellus (strain ATCC 27405 / DSM 1237 / JCM 9322 / NBRC 103400 / NCIMB 10682 / NRRL B-4536 / VPI 7372) (Clostridium thermocellum).